We begin with the raw amino-acid sequence, 324 residues long: ATP synthase mitochondrial F1 complex assembly factor 1 (324 aa).

The N-terminal 54 residues, Met1–Leu54, are a transit peptide targeting the mitochondrion.

Belongs to the ATP11 family. Interacts with ATP5F1B; involved in the assembly of the F1 component of the mitochondrial ATP synthase (ATPase). Widely expressed but with low level.

Its subcellular location is the mitochondrion inner membrane. Has a complex stabilizing activity in the assembly of the mitochondrial F1-F0 complex. This Mus musculus (Mouse) protein is ATP synthase mitochondrial F1 complex assembly factor 1.